Reading from the N-terminus, the 917-residue chain is von Willebrand factor A domain-containing protein DDB_G0285975 (917 aa).

The disordered stretch occupies residues 12–51; sequence DTTTTTTPTTPTTPTTPTTTPTTTTTPTTTPTTTTTSTTP. A compositionally biased stretch (low complexity) spans 13–51; it reads TTTTTTPTTPTTPTTPTTTPTTTTTPTTTPTTTTTSTTP. In terms of domain architecture, VIT spans 87–215; that stretch reads RYNTGLKNIS…NVTIHLTIIS (129 aa). The 169-residue stretch at 339 to 507 folds into the VWFA domain; the sequence is EFIFLIDCSG…NFEEQVMKLV (169 aa). A t-SNARE coiled-coil homology domain is found at 679–741; that stretch reads LFSSENRNQT…INSIPQKSNI (63 aa). Low complexity-rich tracts occupy residues 751-760 and 774-818; these read SPSEVSTSKS and NNNN…NNNN. Residues 751-822 form a disordered region; the sequence is SPSEVSTSKS…NNNNNNSDNS (72 aa).

The sequence is that of von Willebrand factor A domain-containing protein DDB_G0285975 from Dictyostelium discoideum (Social amoeba).